Here is a 21-residue protein sequence, read N- to C-terminus: Protein YadW (21 aa).

This chain is Protein YadW, found in Escherichia coli (strain K12).